A 298-amino-acid polypeptide reads, in one-letter code: uncharacterized protein (298 aa).

Catalysis depends on charge relay system residues Thr43 and Tyr105. Tyr131 functions as the Proton donor in the catalytic mechanism. Lys159 functions as the Schiff-base intermediate with substrate in the catalytic mechanism.

Belongs to the DapA family. As to quaternary structure, homotetramer.

The protein resides in the cytoplasm. This is an uncharacterized protein from Pyrococcus furiosus (strain ATCC 43587 / DSM 3638 / JCM 8422 / Vc1).